The chain runs to 347 residues: MLNDRAQRLLKTLVERYIADGQPVGSRTLTQLSGLDISPASVRNVMAELEDMGLVASPHTSAGRVPTARGYRVFVDKLLTMHPLEQQALRQVESGIHPDSPLRMAAAASQLLSDLTHFAGVVITPQRADAAFRQIEFLRLSEKRILLILVTPLGDVQNHLLVTDRDYTPGELIETANYLNHHYAGQSLEHITRDLEQELASLQGHIARLMTAAIHASKEATSQDDIVVSGEKRLLSVEELSSDLASLRRLFDMFEHKTELLHLLNISRQAQGVSLFIGEESGLSPLDGCTVVTAPYTFDGTRVGTLGVVGPTRMNYERVIPIVDITARLVSSALSSPLSGSDAPSSH.

Belongs to the HrcA family.

Its function is as follows. Negative regulator of class I heat shock genes (grpE-dnaK-dnaJ and groELS operons). Prevents heat-shock induction of these operons. This is Heat-inducible transcription repressor HrcA from Laribacter hongkongensis (strain HLHK9).